Consider the following 508-residue polypeptide: Photosystem II CP47 reaction center protein (508 aa).

Transmembrane regions (helical) follow at residues 21–36 (SVHI…WAGS), 101–115 (IVFS…IWHW), 140–156 (GIHL…FGAF), 203–218 (IAAG…FHLS), 237–252 (VLSS…AFVV), and 457–472 (SFAL…HGAR).

The protein belongs to the PsbB/PsbC family. PsbB subfamily. In terms of assembly, PSII is composed of 1 copy each of membrane proteins PsbA, PsbB, PsbC, PsbD, PsbE, PsbF, PsbH, PsbI, PsbJ, PsbK, PsbL, PsbM, PsbT, PsbX, PsbY, PsbZ, Psb30/Ycf12, at least 3 peripheral proteins of the oxygen-evolving complex and a large number of cofactors. It forms dimeric complexes. The cofactor is Binds multiple chlorophylls. PSII binds additional chlorophylls, carotenoids and specific lipids..

Its subcellular location is the plastid. It localises to the chloroplast thylakoid membrane. Its function is as follows. One of the components of the core complex of photosystem II (PSII). It binds chlorophyll and helps catalyze the primary light-induced photochemical processes of PSII. PSII is a light-driven water:plastoquinone oxidoreductase, using light energy to abstract electrons from H(2)O, generating O(2) and a proton gradient subsequently used for ATP formation. This is Photosystem II CP47 reaction center protein from Carica papaya (Papaya).